The following is a 422-amino-acid chain: Lactose-binding protein (422 aa).

The N-terminal stretch at 1-28 is a signal peptide; the sequence is MDYSRLLKRSVSAALTAAALLCSTAAFA. The segment at 246–277 is lactose-binding; the sequence is SNDGIRALTSGDVASVLRGVWITGTVKSQPDQ.

The protein belongs to the bacterial solute-binding protein 1 family.

The protein resides in the periplasm. Functionally, part of the binding-protein-dependent transport system for lactose. In Rhizobium radiobacter (Agrobacterium tumefaciens), this protein is Lactose-binding protein (lacE).